The sequence spans 349 residues: 4-hydroxythreonine-4-phosphate dehydrogenase (349 aa).

T136 serves as a coordination point for substrate. 3 residues coordinate a divalent metal cation: H171, H216, and H281. Substrate is bound by residues K289, N298, and R307.

Belongs to the PdxA family. Homodimer. A divalent metal cation serves as cofactor.

It is found in the cytoplasm. It catalyses the reaction 4-(phosphooxy)-L-threonine + NAD(+) = 3-amino-2-oxopropyl phosphate + CO2 + NADH. It participates in cofactor biosynthesis; pyridoxine 5'-phosphate biosynthesis; pyridoxine 5'-phosphate from D-erythrose 4-phosphate: step 4/5. Functionally, catalyzes the NAD(P)-dependent oxidation of 4-(phosphooxy)-L-threonine (HTP) into 2-amino-3-oxo-4-(phosphooxy)butyric acid which spontaneously decarboxylates to form 3-amino-2-oxopropyl phosphate (AHAP). This Synechocystis sp. (strain ATCC 27184 / PCC 6803 / Kazusa) protein is 4-hydroxythreonine-4-phosphate dehydrogenase.